Here is a 416-residue protein sequence, read N- to C-terminus: Phosphoglycerate kinase (416 aa).

Residues Val-23, Asp-24, Phe-25, Asn-26, Arg-39, Ser-62, His-63, Gly-65, Arg-66, Leu-121, Arg-122, His-169, and Arg-170 each contribute to the (2R)-3-phosphoglycerate site. Gly-213 is an ADP binding site. Gly-213 is a CDP binding site. Residues Ala-214 and Lys-215 each coordinate AMP. Ala-214 lines the ATP pocket. Residue Ala-214 coordinates Mg(2+). Position 218 (Asp-218) interacts with CDP. A Mg(2+)-binding site is contributed by Asp-218. Lys-219 contacts AMP. Position 219 (Lys-219) interacts with ATP. Gly-237 contributes to the ADP binding site. Position 237 (Gly-237) interacts with CDP. Gly-238 and Gly-312 together coordinate AMP. Residues Gly-238 and Gly-312 each coordinate ATP. Residues Gly-337 and Phe-342 each contribute to the CDP site. Residue Phe-342 participates in ADP binding. AMP is bound at residue Glu-343. ATP contacts are provided by Glu-343, Asp-374, and Thr-375. Asp-374 is a Mg(2+) binding site.

Belongs to the phosphoglycerate kinase family. Monomer. The cofactor is Mg(2+).

It localises to the cytoplasm. The protein localises to the mitochondrion. It carries out the reaction (2R)-3-phosphoglycerate + ATP = (2R)-3-phospho-glyceroyl phosphate + ADP. The protein operates within carbohydrate degradation; glycolysis; pyruvate from D-glyceraldehyde 3-phosphate: step 2/5. In terms of biological role, catalyzes one of the two ATP producing reactions in the glycolytic pathway via the reversible conversion of 1,3-diphosphoglycerate to 3-phosphoglycerate. Both L- and D- forms of purine and pyrimidine nucleotides can be used as substrates, but the activity is much lower on pyrimidines. Negatively regulates the biosynthesis of acetyl-CoA from pyruvate in the mitochondrion. This is Phosphoglycerate kinase (pgkA) from Agaricus bisporus (White button mushroom).